The sequence spans 207 residues: LysM and putative peptidoglycan-binding domain-containing protein 2 (207 aa).

The LysM domain maps to 61-105; that stretch reads IEHRLSPSDTLQGIALKYGVTMEQIKRANKLFSTDCIFLRKSLNI. The disordered stretch occupies residues 186–207; that stretch reads AQRLKEEDLRHDDSYATCSYQH. Positions 188 to 199 are enriched in basic and acidic residues; sequence RLKEEDLRHDDS.

In Xenopus tropicalis (Western clawed frog), this protein is LysM and putative peptidoglycan-binding domain-containing protein 2 (lysmd2).